A 359-amino-acid polypeptide reads, in one-letter code: Prostaglandin D2 receptor (359 aa).

At 1 to 21 the chain is on the extracellular side; sequence MKSPFYRCQNTTSVEKGNSAV. N10 is a glycosylation site (N-linked (GlcNAc...) asparagine). A helical membrane pass occupies residues 22-42; the sequence is MGGVLFSTGLLGNLLALGLLA. Residues 43-59 are Cytoplasmic-facing; sequence RSGLGWCSRRPLRPLPS. Residues 60-80 form a helical membrane-spanning segment; sequence VFYMLVCGLTVTDLLGKCLLS. Residues 81–107 are Extracellular-facing; the sequence is PVVLAAYAQNRSLRVLAPALDNSLCQA. N90 carries N-linked (GlcNAc...) asparagine glycosylation. An intrachain disulfide couples C105 to C183. Residues 108–128 form a helical membrane-spanning segment; it reads FAFFMSFFGLSSTLQLLAMAL. Residues 129 to 150 are Cytoplasmic-facing; sequence ECWLSLGHPFFYRRHITLRLGA. A helical membrane pass occupies residues 151-171; it reads LVAPVVSAFSLAFCALPFMGF. Topologically, residues 172 to 195 are extracellular; it reads GKFVQYCPGTWCFIQMVHEEGSLS. A helical transmembrane segment spans residues 196–216; it reads VLGYSVLYSSLMALLVLATVL. Topologically, residues 217 to 262 are cytoplasmic; that stretch reads CNLGAMRNLYAMHRRLQRHPRSCTRDCAEPRADGREASPQPLEELD. Residues 263 to 283 form a helical membrane-spanning segment; sequence HLLLLALMTVLFTMCSLPVIY. Residues 284 to 310 are Extracellular-facing; that stretch reads RAYYGAFKDVKEKNRTSEEAEDLRALR. A glycan (N-linked (GlcNAc...) asparagine) is linked at N297. Residues 311 to 331 traverse the membrane as a helical segment; it reads FLSVISIVDPWIFIIFRSPVF. The Cytoplasmic segment spans residues 332-359; it reads RIFFHKIFIRPLRYRSRCSNSTNMESSL.

The protein belongs to the G-protein coupled receptor 1 family. As to expression, expressed in retinal choroid, ciliary epithelium, longitudinal and circular ciliary muscles, iris, small intestine and platelet membranes.

Its subcellular location is the cell membrane. Receptor for prostaglandin D2 (PGD2). The activity of this receptor is mainly mediated by G(s) proteins that stimulate adenylate cyclase, resulting in an elevation of intracellular cAMP. A mobilization of calcium is also observed, but without formation of inositol 1,4,5-trisphosphate. Involved in PLA2G3-dependent maturation of mast cells. PLA2G3 is secreted by immature mast cells and acts on nearby fibroblasts upstream to PTDGS to synthesize PGD2, which in turn promotes mast cell maturation and degranulation via PTGDR. In Homo sapiens (Human), this protein is Prostaglandin D2 receptor (PTGDR).